A 371-amino-acid chain; its full sequence is tRNA N6-adenosine threonylcarbamoyltransferase (371 aa).

Fe cation-binding residues include histidine 110 and histidine 114. Substrate is bound by residues 132-136 (LVSGG), aspartate 165, glycine 178, aspartate 182, and asparagine 289. Aspartate 317 contributes to the Fe cation binding site.

Belongs to the KAE1 / TsaD family. Fe(2+) is required as a cofactor.

The protein localises to the cytoplasm. The enzyme catalyses L-threonylcarbamoyladenylate + adenosine(37) in tRNA = N(6)-L-threonylcarbamoyladenosine(37) in tRNA + AMP + H(+). In terms of biological role, required for the formation of a threonylcarbamoyl group on adenosine at position 37 (t(6)A37) in tRNAs that read codons beginning with adenine. Is involved in the transfer of the threonylcarbamoyl moiety of threonylcarbamoyl-AMP (TC-AMP) to the N6 group of A37, together with TsaE and TsaB. TsaD likely plays a direct catalytic role in this reaction. In Solidesulfovibrio magneticus (strain ATCC 700980 / DSM 13731 / RS-1) (Desulfovibrio magneticus), this protein is tRNA N6-adenosine threonylcarbamoyltransferase.